We begin with the raw amino-acid sequence, 89 residues long: Small ribosomal subunit protein uS14 (89 aa).

4 residues coordinate Zn(2+): C52, C55, C68, and C71.

It belongs to the universal ribosomal protein uS14 family. As to quaternary structure, part of the 30S ribosomal subunit. Contacts proteins S3 and S10. The cofactor is Zn(2+).

In terms of biological role, binds 16S rRNA, required for the assembly of 30S particles and may also be responsible for determining the conformation of the 16S rRNA at the A site. The chain is Small ribosomal subunit protein uS14 (rpsN) from Salinibacter ruber (strain DSM 13855 / M31).